The sequence spans 395 residues: 3-sulfinopropanoyl-CoA desulfinase (395 aa).

FAD-binding positions include 121-124, Ser-130, and 153-156; these read ICIS and YWIT. 243–244 serves as a coordination point for substrate; the sequence is YN. FAD-binding positions include Arg-272, Gln-339, Ser-343, 366–370, and Gln-387; that span reads GGTAQ.

It belongs to the acyl-CoA dehydrogenase family. Homotrimer or homotetramer. FAD serves as cofactor.

The catalysed reaction is 3-sulfinopropanoyl-CoA + H2O = propanoyl-CoA + sulfite + H(+). Its function is as follows. Catalyzes the conversion 3-sulfinopropanoyl-CoA (3SP-CoA) to propanoyl-CoA by abstraction of sulfite. Does not show dehydrogenase activity. The chain is 3-sulfinopropanoyl-CoA desulfinase from Cupriavidus necator (strain ATCC 43291 / DSM 13513 / CCUG 52238 / LMG 8453 / N-1) (Ralstonia eutropha).